Consider the following 1423-residue polypeptide: Autophagy-related protein 11 (1423 aa).

Coiled coils occupy residues 551–589 and 625–978; these read DDEL…QSQA and SEGT…ASEL. 2 disordered regions span residues 583 to 660 and 1028 to 1048; these read LHRQ…SNRA and RAER…SLRK. A compositionally biased stretch (polar residues) spans 585–602; the sequence is RQSQASRPGNLFQPQTNS. A compositionally biased stretch (basic and acidic residues) spans 631–648; sequence LLRRISELENELREEKQR. Polar residues-rich tracts occupy residues 650–660 and 1034–1047; these read SRIQNDLSNRA and QNPN…TSLR. Residues 1102–1130 adopt a coiled-coil conformation; it reads HRIKEVEHKARKWQKEARSYRDRAHIAQK. The disordered stretch occupies residues 1327 to 1423; sequence SLRAAAPETP…DYTYESPGKK (97 aa). Positions 1383–1395 are enriched in basic and acidic residues; sequence KTAEPRRMLDRQE.

Belongs to the ATG11 family. Homodimer and potential homooligomers. Interacts with ATG1 kinase and the ATG19 and ATG34 cargo protein transporters. Interacts with ATG9, ATG17 and ATG20.

It is found in the preautophagosomal structure membrane. It localises to the vacuole membrane. In terms of biological role, involved in cytoplasm to vacuole transport (Cvt), pexophagy, mitophagy and nucleophagy. Recruits mitochondria for their selective degradation via autophagy (mitophagy) during starvation, through its interaction with ATG32. Works as scaffold proteins that recruit ATG proteins to the pre-autophagosome (PAS), the site of vesicle/autophagosome formation. Required for ATG9 anterograde transport from the mitochondria to the PAS. Also recruits the ATG19-prAPE1 complex to the PAS. Required for the Cvt vesicles completion. Plays a role in morphological differentiation and cephalosporin production. In Hapsidospora chrysogena (Acremonium chrysogenum), this protein is Autophagy-related protein 11.